Here is a 180-residue protein sequence, read N- to C-terminus: Endothelin-2 (180 aa).

An N-terminal signal peptide occupies residues 1-26; sequence MVALPTAWCSVALALLVALHEGKSQS. A propeptide spanning residues 27–47 is cleaved from the precursor; that stretch reads AATSEEPPAPSARARGSHLRL. Cystine bridges form between Cys50-Cys64 and Cys52-Cys60. Positions 71–180 are excised as a propeptide; the sequence is VNTPGQTAPY…ESSHSRWRKR (110 aa). An endothelin-like region spans residues 97-112; that stretch reads CECYSTRDSACVTFCH. Residues 157-180 form a disordered region; sequence NFTRHQQQKATREPESSHSRWRKR.

Belongs to the endothelin/sarafotoxin family.

Its subcellular location is the secreted. Its function is as follows. Endothelins are endothelium-derived vasoconstrictor peptides. This Atelerix albiventris (Middle-African hedgehog) protein is Endothelin-2 (EDN2).